Here is a 435-residue protein sequence, read N- to C-terminus: GTPase Obg (435 aa).

An Obg domain is found at 6–164 (ADFVDRVKIF…RWLELELKIL (159 aa)). The 171-residue stretch at 165 to 335 (ADVGLVGYPN…LVSKLASIVR (171 aa)) folds into the OBG-type G domain. GTP contacts are provided by residues 171 to 178 (GYPNVGKS), 196 to 200 (FTTLI), 217 to 220 (DIPG), 287 to 290 (NKID), and 316 to 318 (SAL). Mg(2+) is bound by residues Ser-178 and Thr-198. The OCT domain occupies 357-435 (RRLPEKFHLE…IGDFEFEYRE (79 aa)).

It belongs to the TRAFAC class OBG-HflX-like GTPase superfamily. OBG GTPase family. In terms of assembly, monomer. It depends on Mg(2+) as a cofactor.

The protein localises to the cytoplasm. An essential GTPase which binds GTP, GDP and possibly (p)ppGpp with moderate affinity, with high nucleotide exchange rates and a fairly low GTP hydrolysis rate. Plays a role in control of the cell cycle, stress response, ribosome biogenesis and in those bacteria that undergo differentiation, in morphogenesis control. This is GTPase Obg from Thermotoga sp. (strain RQ2).